Here is a 743-residue protein sequence, read N- to C-terminus: Catalase-peroxidase (743 aa).

Positions 1–15 (MSSDSRPPQPDTSTQ) are enriched in polar residues. The interval 1 to 40 (MSSDSRPPQPDTSTQSNSESESPAISSPTPQDHAPMTNRD) is disordered. Low complexity predominate over residues 16–28 (SNSESESPAISSP). The segment at residues 110 to 233 (WHAAGTYRIQ…YGATTMGLIY (124 aa)) is a cross-link (tryptophyl-tyrosyl-methioninium (Trp-Tyr) (with M-259)). His111 (proton acceptor) is an active-site residue. The segment at residues 233-259 (YVNPEGPEGKPDPVAAAHDIRETFARM) is a cross-link (tryptophyl-tyrosyl-methioninium (Tyr-Met) (with W-110)). His274 serves as a coordination point for heme b. A disordered region spans residues 490-511 (DKRGGANGGRLRLEPQKSWESN).

Belongs to the peroxidase family. Peroxidase/catalase subfamily. In terms of assembly, homodimer or homotetramer. Heme b is required as a cofactor. Post-translationally, formation of the three residue Trp-Tyr-Met cross-link is important for the catalase, but not the peroxidase activity of the enzyme.

It catalyses the reaction H2O2 + AH2 = A + 2 H2O. The enzyme catalyses 2 H2O2 = O2 + 2 H2O. Functionally, bifunctional enzyme with both catalase and broad-spectrum peroxidase activity. This is Catalase-peroxidase from Mycobacterium ulcerans (strain Agy99).